A 554-amino-acid polypeptide reads, in one-letter code: MTFSVPTQGKAFANISFLPYGVGPRDGGICLELHLGPYRILLDCGLEDLTPLLAADPGTVDLVFCSHAHRDHGLGLWQFHQQFPHIPILASEVTQRLLPLNWPDEFVPPFCRVLPWRSPQEVLPGLTVELLPAGHLPGAALILLEYHNGDRLYRVIYTGDYCLSHLQLVDGLALTPLRGLKPDVLILEGHYGNRRLPHRRQQEKQFIQAIETVLAKGRNILLPVPPLGLAQEILKLLRTHHQFTGRQVNLWAGESVARGCDAYQGIIDHLPDNVRNFAQHQPLFWDDKVYPHLRPLTDDQGELSLSAPSIVITTTWPAFWPSPAALPGLWTVFMPQLLTLPSCLVNFAWQDLEEFPKYELEDYLLADHSDGRNTTQLIHNLRPQHLVFVHGQPSDIEDLTSLEELQSRYQLHSPAAGNAVALPIGDRFVQPTPPPPQIYEGEIHELEPNKQIHHLGEVVIHLDGQILENSRWGKFGETGIVQARWQGEELVLRGISQRELLKQNQSSKRPVDFDCCANCRHFQHYHCRNPVSPLMGLEVRADGHCPVFESVASS.

To M.jannaschii MJ0047, MJ0162 and MJ1236.

This is an uncharacterized protein from Synechocystis sp. (strain ATCC 27184 / PCC 6803 / Kazusa).